The chain runs to 266 residues: Eukaryotic translation initiation factor 3 subunit J (266 aa).

2 disordered regions span residues 1-142 (MAPS…VSDS) and 215-243 (MSNE…VSLV). The span at 26-44 (DEEEEDVLDSWDAAEDSEV) shows a compositional bias: acidic residues. Residues 40 to 99 (EDSEVEREKAAKAAEAKAKAEAEAAAKKKSKAQRIQEHKEERKKREEEDSSSESEEDEAE) are a coiled coil. Composition is skewed to basic and acidic residues over residues 45-65 (EREK…EAAA) and 73-86 (RIQE…KREE). Positions 87–97 (EDSSSESEEDE) are enriched in acidic residues. 2 stretches are compositionally biased toward basic and acidic residues: residues 98–118 (AERR…HAED) and 218–230 (EKMR…DKGN).

It belongs to the eIF-3 subunit J family. As to quaternary structure, component of the eukaryotic translation initiation factor 3 (eIF-3) complex.

It localises to the cytoplasm. Its function is as follows. Component of the eukaryotic translation initiation factor 3 (eIF-3) complex, which is involved in protein synthesis of a specialized repertoire of mRNAs and, together with other initiation factors, stimulates binding of mRNA and methionyl-tRNAi to the 40S ribosome. The eIF-3 complex specifically targets and initiates translation of a subset of mRNAs involved in cell proliferation. This chain is Eukaryotic translation initiation factor 3 subunit J (hcr1), found in Aspergillus terreus (strain NIH 2624 / FGSC A1156).